Consider the following 91-residue polypeptide: UPF0250 protein mma_3250 (91 aa).

The protein belongs to the UPF0250 family.

This chain is UPF0250 protein mma_3250, found in Janthinobacterium sp. (strain Marseille) (Minibacterium massiliensis).